Consider the following 271-residue polypeptide: Formamidopyrimidine-DNA glycosylase (271 aa).

Catalysis depends on proline 2, which acts as the Schiff-base intermediate with DNA. Residue glutamate 3 is the Proton donor of the active site. Catalysis depends on lysine 57, which acts as the Proton donor; for beta-elimination activity. DNA-binding residues include histidine 90, arginine 109, and arginine 151. The FPG-type zinc finger occupies 236–270 (MVYGRAGEACVTCKTKLQEIRQSNRSSVFCPSCQQ). The Proton donor; for delta-elimination activity role is filled by arginine 260.

It belongs to the FPG family. In terms of assembly, monomer. The cofactor is Zn(2+).

It catalyses the reaction Hydrolysis of DNA containing ring-opened 7-methylguanine residues, releasing 2,6-diamino-4-hydroxy-5-(N-methyl)formamidopyrimidine.. It carries out the reaction 2'-deoxyribonucleotide-(2'-deoxyribose 5'-phosphate)-2'-deoxyribonucleotide-DNA = a 3'-end 2'-deoxyribonucleotide-(2,3-dehydro-2,3-deoxyribose 5'-phosphate)-DNA + a 5'-end 5'-phospho-2'-deoxyribonucleoside-DNA + H(+). Functionally, involved in base excision repair of DNA damaged by oxidation or by mutagenic agents. Acts as a DNA glycosylase that recognizes and removes damaged bases. Has a preference for oxidized purines, such as 7,8-dihydro-8-oxoguanine (8-oxoG). Has AP (apurinic/apyrimidinic) lyase activity and introduces nicks in the DNA strand. Cleaves the DNA backbone by beta-delta elimination to generate a single-strand break at the site of the removed base with both 3'- and 5'-phosphates. The chain is Formamidopyrimidine-DNA glycosylase from Colwellia psychrerythraea (strain 34H / ATCC BAA-681) (Vibrio psychroerythus).